The primary structure comprises 128 residues: Large ribosomal subunit protein bL20c (128 aa).

Belongs to the bacterial ribosomal protein bL20 family.

Its subcellular location is the plastid. The protein localises to the chloroplast. Functionally, binds directly to 23S ribosomal RNA and is necessary for the in vitro assembly process of the 50S ribosomal subunit. It is not involved in the protein synthesizing functions of that subunit. This Nicotiana sylvestris (Wood tobacco) protein is Large ribosomal subunit protein bL20c.